Reading from the N-terminus, the 175-residue chain is Ribosome maturation factor RimM (175 aa).

The 78-residue stretch at 98–175 folds into the PRC barrel domain; sequence EGEYYWHQLE…EMRVDWDADF (78 aa).

The protein belongs to the RimM family. In terms of assembly, binds ribosomal protein uS19.

The protein resides in the cytoplasm. Its function is as follows. An accessory protein needed during the final step in the assembly of 30S ribosomal subunit, possibly for assembly of the head region. Essential for efficient processing of 16S rRNA. May be needed both before and after RbfA during the maturation of 16S rRNA. It has affinity for free ribosomal 30S subunits but not for 70S ribosomes. This chain is Ribosome maturation factor RimM, found in Pseudomonas aeruginosa (strain UCBPP-PA14).